We begin with the raw amino-acid sequence, 332 residues long: 4-hydroxyproline 2-epimerase 2 (332 aa).

C89 (proton acceptor) is an active-site residue. Residues H222, D248, and 253 to 254 (GT) each bind substrate.

This sequence belongs to the proline racemase family.

It catalyses the reaction trans-4-hydroxy-L-proline = cis-4-hydroxy-D-proline. Functionally, catalyzes the epimerization of trans-4-hydroxy-L-proline (t4LHyp) to cis-4-hydroxy-D-proline (c4DHyp). Is likely involved in a degradation pathway that converts t4LHyp to alpha-ketoglutarate. Displays no proline racemase activity. This is 4-hydroxyproline 2-epimerase 2 from Rhizobium rhizogenes (strain K84 / ATCC BAA-868) (Agrobacterium radiobacter).